We begin with the raw amino-acid sequence, 262 residues long: Acyl-[acyl-carrier-protein]--UDP-N-acetylglucosamine O-acyltransferase (262 aa).

This sequence belongs to the transferase hexapeptide repeat family. LpxA subfamily. In terms of assembly, homotrimer.

It is found in the cytoplasm. It catalyses the reaction a (3R)-hydroxyacyl-[ACP] + UDP-N-acetyl-alpha-D-glucosamine = a UDP-3-O-[(3R)-3-hydroxyacyl]-N-acetyl-alpha-D-glucosamine + holo-[ACP]. It participates in glycolipid biosynthesis; lipid IV(A) biosynthesis; lipid IV(A) from (3R)-3-hydroxytetradecanoyl-[acyl-carrier-protein] and UDP-N-acetyl-alpha-D-glucosamine: step 1/6. In terms of biological role, involved in the biosynthesis of lipid A, a phosphorylated glycolipid that anchors the lipopolysaccharide to the outer membrane of the cell. The polypeptide is Acyl-[acyl-carrier-protein]--UDP-N-acetylglucosamine O-acyltransferase (Campylobacter concisus (strain 13826)).